The primary structure comprises 534 residues: Serine/threonine-protein kinase 35 (534 aa).

The interval 32 to 176 (VESHGSLGAQ…AAAARAMDPV (145 aa)) is disordered. 2 stretches are compositionally biased toward low complexity: residues 39 to 65 (GAQA…TSRA) and 166 to 176 (PAAAARAMDPV). The Protein kinase domain maps to 202-530 (YSLLAEIGRG…FELETRMDQV (329 aa)). Residues 208–216 (IGRGSYGVV) and Lys-231 contribute to the ATP site. Asp-360 (proton acceptor) is an active-site residue.

This sequence belongs to the protein kinase superfamily. Ser/Thr protein kinase family. In terms of assembly, interacts with PDLIM1/CLP-36. Post-translationally, autophosphorylated. Expressed in testis.

It is found in the nucleus. It localises to the nucleolus. Its subcellular location is the cytoplasm. It catalyses the reaction L-seryl-[protein] + ATP = O-phospho-L-seryl-[protein] + ADP + H(+). The catalysed reaction is L-threonyl-[protein] + ATP = O-phospho-L-threonyl-[protein] + ADP + H(+). In Homo sapiens (Human), this protein is Serine/threonine-protein kinase 35 (STK35).